A 377-amino-acid chain; its full sequence is uncharacterized protein (377 aa).

Positions 1–23 (MLKFRNFFKLTLLTLASAFFLSG) are cleaved as a signal peptide. Residue Cys24 is the site of N-palmitoyl cysteine attachment. A lipid anchor (S-diacylglycerol cysteine) is attached at Cys24.

The protein localises to the cell membrane. This is an uncharacterized protein from Mycoplasma genitalium (strain ATCC 33530 / DSM 19775 / NCTC 10195 / G37) (Mycoplasmoides genitalium).